The primary structure comprises 548 residues: Glutamate--tRNA ligase (548 aa).

Residues 102 to 112 (PSPSGPLHIGH) carry the 'HIGH' region motif.

Belongs to the class-I aminoacyl-tRNA synthetase family. Glutamate--tRNA ligase type 2 subfamily.

Its subcellular location is the cytoplasm. It carries out the reaction tRNA(Glu) + L-glutamate + ATP = L-glutamyl-tRNA(Glu) + AMP + diphosphate. Its function is as follows. Catalyzes the attachment of glutamate to tRNA(Glu) in a two-step reaction: glutamate is first activated by ATP to form Glu-AMP and then transferred to the acceptor end of tRNA(Glu). This Thermoplasma acidophilum (strain ATCC 25905 / DSM 1728 / JCM 9062 / NBRC 15155 / AMRC-C165) protein is Glutamate--tRNA ligase.